A 323-amino-acid chain; its full sequence is Syntaxin-42 (323 aa).

At 1 to 302 the chain is on the cytoplasmic side; that stretch reads MATRNRTTVY…QREGAMVKCA (302 aa). Residues 227-289 form the t-SNARE coiled-coil homology domain; it reads QHVSAERERE…EEGYKQLQKA (63 aa). The helical; Anchor for type IV membrane protein transmembrane segment at 303-323 threads the bilayer; sequence TILLVLCLIMIVLLILKNILF.

It belongs to the syntaxin family. Interacts with VTI12 and SYP61 to form a t-SNARE complex and with VPS45. As to expression, expressed at low levels in roots, stems, flowers and leaves.

It is found in the golgi apparatus. The protein resides in the trans-Golgi network membrane. Contributes to the regulation of secretory and vacuolar transport pathways in the post-Golgi network, and to the maintenance of the Golgi apparatus and trans-Golgi network (TGN) morphologies. Vesicle trafficking protein that functions in the secretory pathway and mediates liposome fusion. Required for extracellular resistance responses to a fungal pathogen. Also involved in the protection of chloroplasts from salicylic acid-dependent biotic stress. In Arabidopsis thaliana (Mouse-ear cress), this protein is Syntaxin-42.